We begin with the raw amino-acid sequence, 305 residues long: UDP-3-O-acyl-N-acetylglucosamine deacetylase (305 aa).

Residues H79, H238, and D242 each contribute to the Zn(2+) site. H265 functions as the Proton donor in the catalytic mechanism.

This sequence belongs to the LpxC family. Requires Zn(2+) as cofactor.

It catalyses the reaction a UDP-3-O-[(3R)-3-hydroxyacyl]-N-acetyl-alpha-D-glucosamine + H2O = a UDP-3-O-[(3R)-3-hydroxyacyl]-alpha-D-glucosamine + acetate. The protein operates within glycolipid biosynthesis; lipid IV(A) biosynthesis; lipid IV(A) from (3R)-3-hydroxytetradecanoyl-[acyl-carrier-protein] and UDP-N-acetyl-alpha-D-glucosamine: step 2/6. In terms of biological role, catalyzes the hydrolysis of UDP-3-O-myristoyl-N-acetylglucosamine to form UDP-3-O-myristoylglucosamine and acetate, the committed step in lipid A biosynthesis. This is UDP-3-O-acyl-N-acetylglucosamine deacetylase from Aliivibrio fischeri (strain ATCC 700601 / ES114) (Vibrio fischeri).